Here is a 265-residue protein sequence, read N- to C-terminus: UPF0246 protein NT01EI_0662 (265 aa).

It belongs to the UPF0246 family.

This Edwardsiella ictaluri (strain 93-146) protein is UPF0246 protein NT01EI_0662.